A 402-amino-acid polypeptide reads, in one-letter code: S-adenosylmethionine synthase (402 aa).

ATP is bound at residue histidine 15. Aspartate 17 serves as a coordination point for Mg(2+). Glutamate 43 is a K(+) binding site. L-methionine is bound by residues glutamate 56 and glutamine 99. The tract at residues 99–109 (QSPDIAQGVDT) is flexible loop. ATP-binding positions include 174-176 (DGK), 247-248 (RF), aspartate 256, 262-263 (RK), alanine 279, and lysine 283. Aspartate 256 provides a ligand contact to L-methionine. Position 287 (lysine 287) interacts with L-methionine.

The protein belongs to the AdoMet synthase family. In terms of assembly, homotetramer; dimer of dimers. The cofactor is Mg(2+). It depends on K(+) as a cofactor.

The protein resides in the cytoplasm. The enzyme catalyses L-methionine + ATP + H2O = S-adenosyl-L-methionine + phosphate + diphosphate. Its pathway is amino-acid biosynthesis; S-adenosyl-L-methionine biosynthesis; S-adenosyl-L-methionine from L-methionine: step 1/1. In terms of biological role, catalyzes the formation of S-adenosylmethionine (AdoMet) from methionine and ATP. The overall synthetic reaction is composed of two sequential steps, AdoMet formation and the subsequent tripolyphosphate hydrolysis which occurs prior to release of AdoMet from the enzyme. The chain is S-adenosylmethionine synthase from Streptomyces griseus subsp. griseus (strain JCM 4626 / CBS 651.72 / NBRC 13350 / KCC S-0626 / ISP 5235).